A 38-amino-acid polypeptide reads, in one-letter code: Large ribosomal subunit protein bL36 (38 aa).

The protein belongs to the bacterial ribosomal protein bL36 family.

The sequence is that of Large ribosomal subunit protein bL36 from Lactobacillus johnsonii (strain CNCM I-12250 / La1 / NCC 533).